We begin with the raw amino-acid sequence, 442 residues long: MENAKMNSLIAQYPLVKDLVALKETTWFNPSTTSLAEGLPYVGLTEQDVQDAHARLSRFAPYLAKAFAETAATGGIIESELVAIPAMQKRLEKEYQQPISGQLLLKKDSHLPISGSIKARGGIYEVLAHAEKLALEAGLLTLDDDYSKLLSPEFKQFFSQYSIAVGSTGNLGLSIGIMSARIGFKVTVHMSADARAWKKAKLRSHGVTVVEYEQDYGVAVEEGRKAAQSDPNCFFIDDENSRTLFLGYSVAGQRLKAQFAQQGRIVDADNPLFVYLPCGVGGGPGGVAFGLKLAFGDHVHCFFAEPTHSPCMLLGVHTGLHDQISVQDIGIDNLTAADGLAVGRASCFVGRAMERLLDGFYTLSDQTMYDMLGWLAQEEGIRLEPSALAGMAGPQRVCASVSYQQMHGFSAEQLRNATHLVWATGGGMVPEEEMNQYLAKGR.

Lys-118 is modified (N6-(pyridoxal phosphate)lysine).

This sequence belongs to the serine/threonine dehydratase family. DsdA subfamily. Monomer. Pyridoxal 5'-phosphate is required as a cofactor.

The enzyme catalyses D-serine = pyruvate + NH4(+). The chain is D-serine dehydratase from Shigella flexneri.